A 264-amino-acid chain; its full sequence is MIGRLLRGGFMTAIYAYLYIPIIILIVNSFNSSRFGINWQGFTTKWYSLLMNNDSLLQAAQHSLTMAVFSATFATLIGSLTAVALYRYRFRGKPFVSGMLFVVMMSPDIVMAISLLVLFMLLGIQLGFWSLLFSHITFCLPFVVVTVYSRLKGFDVRMLEAAKDLGASEFTILRKIILPLAMPAVAAGWVLSFTLSMDDVVVSSFVTGPSYEILPLKIYSMVKVGVSPEVNALATILLVLSLVMVIASQLIARDKTKGNTGDVK.

The Cytoplasmic segment spans residues 1-7 (MIGRLLR). The helical transmembrane segment at 8–27 (GGFMTAIYAYLYIPIIILIV) threads the bilayer. At 28–65 (NSFNSSRFGINWQGFTTKWYSLLMNNDSLLQAAQHSLT) the chain is on the periplasmic side. The 189-residue stretch at 60–248 (AQHSLTMAVF…VLSLVMVIAS (189 aa)) folds into the ABC transmembrane type-1 domain. Residues 66–85 (MAVFSATFATLIGSLTAVAL) traverse the membrane as a helical segment. The Cytoplasmic portion of the chain corresponds to 86–100 (YRYRFRGKPFVSGML). Residues 101–120 (FVVMMSPDIVMAISLLVLFM) form a helical membrane-spanning segment. The Periplasmic segment spans residues 121-128 (LLGIQLGF). Residues 129-148 (WSLLFSHITFCLPFVVVTVY) traverse the membrane as a helical segment. Topologically, residues 149–176 (SRLKGFDVRMLEAAKDLGASEFTILRKI) are cytoplasmic. Residues 177-196 (ILPLAMPAVAAGWVLSFTLS) form a helical membrane-spanning segment. Topologically, residues 197–231 (MDDVVVSSFVTGPSYEILPLKIYSMVKVGVSPEVN) are periplasmic. Residues 232-251 (ALATILLVLSLVMVIASQLI) form a helical membrane-spanning segment. Residues 252 to 264 (ARDKTKGNTGDVK) are Cytoplasmic-facing.

Belongs to the binding-protein-dependent transport system permease family. CysTW subfamily.

The protein resides in the cell inner membrane. Functionally, required for the activity of the bacterial periplasmic transport system of putrescine and spermidine. In Escherichia coli O157:H7, this protein is Spermidine/putrescine transport system permease protein PotC (potC).